The primary structure comprises 691 residues: Solute carrier organic anion transporter family member 1B1 (691 aa).

Residues 1 to 28 (MDQNQHLNKTAEAQPSENKKTRYCNGLK) are Cytoplasmic-facing. Residues 29–48 (MFLAALSLSFIAKTLGAIIM) form a helical membrane-spanning segment. At 49 to 67 (KSSIIHIERRFEISSSLVG) the chain is on the extracellular side. The helical transmembrane segment at 68 to 88 (FIDGSFEIGNLLVIVFVSYFG) threads the bilayer. Residues 89-94 (SKLHRP) are Cytoplasmic-facing. The chain crosses the membrane as a helical span at residues 95–119 (KLIGIGCFIMGIGGVLTALPHFFMG). Topologically, residues 120–168 (YYRYSKETNINSSENSTSTLSTCLINQILSLNRASPEIVGKGCLKESGS) are extracellular. Residues Asn-130 and Asn-134 are each glycosylated (N-linked (GlcNAc...) asparagine). A helical transmembrane segment spans residues 169–197 (YMWIYVFMGNMLRGIGETPIVPLGLSYID). At 198 to 216 (DFAKEGHSSLYLGILNAIA) the chain is on the cytoplasmic side. A helical membrane pass occupies residues 217-237 (MIGPIIGFTLGSLFSKMYVDI). Residues 238–255 (GYVDLSTIRITPTDSRWV) are Extracellular-facing. Residues 256-280 (GAWWLNFLVSGLFSIISSIPFFFLP) form a helical membrane-spanning segment. Residues 281 to 331 (QTPNKPQKERKASLSLHVLETNDEKDQTANLTNQGKNITKNVTGFFQSFKS) are Cytoplasmic-facing. 2 positions are modified to phosphoserine: Ser-293 and Ser-295. The helical transmembrane segment at 332 to 353 (ILTNPLYVMFVLLTLLQVSSYI) threads the bilayer. Residues 354–373 (GAFTYVFKYVEQQYGQPSSK) are Extracellular-facing. The chain crosses the membrane as a helical span at residues 374–397 (ANILLGVITIPIFASGMFLGGYII). The Cytoplasmic portion of the chain corresponds to 398–401 (KKFK). Residues 402 to 425 (LNTVGIAKFSCFTAVMSLSFYLLY) form a helical membrane-spanning segment. Residues 426–537 (FFILCENKSV…DACTRKFYFF (112 aa)) lie on the Extracellular side of the membrane. N-linked (GlcNAc...) asparagine glycosylation occurs at Asn-432. Residues 453–508 (DVPLSYCNSDCNCDESQWEPVCGNNGITYISPCLAGCKSSSGNKKPIVFYNCSCLE) enclose the Kazal-like domain. Intrachain disulfides connect Cys-459–Cys-489, Cys-465–Cys-485, and Cys-474–Cys-506. N-linked (GlcNAc...) asparagine glycosylation is found at Asn-503 and Asn-516. Residues 538 to 560 (VAIQVLNLFFSALGGTSHVMLIV) form a helical membrane-spanning segment. Over 561-569 (KIVQPELKS) the chain is Cytoplasmic. A helical membrane pass occupies residues 570 to 595 (LALGFHSMVIRALGGILAPIYFGALI). At 596–629 (DTTCIKWSTNNCGTRGSCRTYNSTSFSRVYLGLS) the chain is on the extracellular side. The N-linked (GlcNAc...) asparagine glycan is linked to Asn-617. Residues 630–647 (SMLRVSSLVLYIILIYAM) traverse the membrane as a helical segment. At 648–691 (KKKYQEKDINASENGSVMDEANLESLNKNKHFVPSAGADSETHC) the chain is on the cytoplasmic side. Residues Ser-672 and Ser-682 each carry the phosphoserine modification.

Belongs to the organo anion transporter (TC 2.A.60) family. In terms of tissue distribution, highly expressed in liver, at the basolateral membranes of centrilobular hepatocytes. Expressed in liver (at protein level). Expressed in fetal liver. Not detected in heart, brain, placenta, lung, skeletal muscle, kidney, pancreas, spleen, thymus, prostate, testis, ovary, small intestine, colon and leukocyte. In testis, primarily localized to the basal membrane of Sertoli cells and weakly expressed in Leydig cells and within the tubules.

The protein resides in the basolateral cell membrane. It is found in the basal cell membrane. The enzyme catalyses taurocholate(out) = taurocholate(in). It carries out the reaction dehydroepiandrosterone 3-sulfate(out) = dehydroepiandrosterone 3-sulfate(in). It catalyses the reaction estrone 3-sulfate(out) = estrone 3-sulfate(in). The catalysed reaction is 3,3',5'-triiodo-L-thyronine(out) = 3,3',5'-triiodo-L-thyronine(in). The enzyme catalyses L-thyroxine(out) = L-thyroxine(in). It carries out the reaction prostaglandin E2(out) = prostaglandin E2(in). It catalyses the reaction thromboxane B2(out) = thromboxane B2(in). The catalysed reaction is 17beta-estradiol 17-O-(beta-D-glucuronate)(out) = 17beta-estradiol 17-O-(beta-D-glucuronate)(in). The enzyme catalyses leukotriene C4(out) = leukotriene C4(in). It carries out the reaction leukotriene E4(out) = leukotriene E4(in). It catalyses the reaction (4E,15E)-bilirubin IXalpha C8-beta-D-glucuronoside(out) = (4E,15E)-bilirubin IXalpha C8-beta-D-glucuronoside(in). The catalysed reaction is bilirubin IXalpha bis-beta-D-glucuronoside(out) = bilirubin IXalpha bis-beta-D-glucuronoside(in). Functionally, mediates the Na(+)-independent uptake of organic anions. Shows broad substrate specificity, can transport both organic anions such as bile acid taurocholate (cholyltaurine) and conjugated steroids (dehydroepiandrosterone 3-sulfate, 17-beta-glucuronosyl estradiol, and estrone 3-sulfate), as well as eicosanoids (prostaglandin E2, thromboxane B2, leukotriene C4, and leukotriene E4), and thyroid hormones (T4/L-thyroxine, and T3/3,3',5'-triiodo-L-thyronine). Can take up bilirubin glucuronides from plasma into the liver, contributing to the detoxification-enhancing liver-blood shuttling loop. Involved in the clearance of endogenous and exogenous substrates from the liver. Transports coproporphyrin I and III, by-products of heme synthesis, and may be involved in their hepatic disposition. May contribute to regulate the transport of organic compounds in testes across the blood-testis-barrier. Can transport HMG-CoA reductase inhibitors (also known as statins), such as pravastatin and pitavastatin, a clinically important class of hypolipidemic drugs. May play an important role in plasma and tissue distribution of the structurally diverse chemotherapeutic drug methotrexate. May also transport antihypertension agents, such as the angiotensin-converting enzyme (ACE) inhibitor prodrug enalapril, and the highly selective angiotensin II AT1-receptor antagonist valsartan, in the liver. Shows a pH-sensitive substrate specificity towards prostaglandin E2 and T4 which may be ascribed to the protonation state of the binding site and leads to a stimulation of substrate transport in an acidic microenvironment. Hydrogencarbonate/HCO3(-) acts as the probable counteranion that exchanges for organic anions. In Homo sapiens (Human), this protein is Solute carrier organic anion transporter family member 1B1 (SLCO1B1).